Consider the following 453-residue polypeptide: Prenyltransferase nscD (453 aa).

Dimethylallyl diphosphate is bound by residues arginine 118, lysine 200, tyrosine 202, lysine 271, tyrosine 273, and tyrosine 428.

It belongs to the tryptophan dimethylallyltransferase family.

It participates in secondary metabolite biosynthesis. Its function is as follows. Prenyltransferase; part of the gene cluster that mediates the biosynthesis of neosartoricin, a prenylated anthracenone that exhibits T-cell antiproliferative activity, suggestive of a physiological role as an immunosuppressive agent. The non-reducing polyketide synthase nscA probably synthesizes and cyclizes the decaketide backbone. The hydrolase nscB then mediates the product release through hydrolysis followed by spontaneous decarboxylation. The prenyltransferase nscD catalyzes the addition of the dimethylallyl group to the aromatic C5. The FAD-dependent monooxygenase nscC is then responsible for the stereospecific hydroxylation at C2. There is no gene encoding O-acetyltransferase in the nsc gene cluster; thus, the last step of 2-O-acetylation leading to neosartoricin may be catalyzed by an unidentified O-acetyltransferase. The chain is Prenyltransferase nscD from Aspergillus fumigatus (strain ATCC MYA-4609 / CBS 101355 / FGSC A1100 / Af293) (Neosartorya fumigata).